The primary structure comprises 511 residues: Cytochrome P450 monooxygenase esdpI (511 aa).

The helical transmembrane segment at 14–34 (VRAGLAIGVAILAIIVLFPGI) threads the bilayer. C453 lines the heme pocket.

It belongs to the cytochrome P450 family. The cofactor is heme.

It is found in the membrane. It participates in secondary metabolite biosynthesis; terpenoid biosynthesis. In terms of biological role, cytochrome P450 monooxygenase; part of the cluster that mediates the biosynthesis of shearones, diterpenoid pyrones (DPs) which are structurally diverse meroterpenoids consisting of a diterpene linked by a pyrone, and which may exhibit a range of bioactivities. Whitin the pathway, esdpI takes part in the molecular scaffold modification via the hydroxylation at C-20 and can transform shearone C into shearone G. The molecular scaffold is commonly biosynthesized by a series of enzymes including the non-reducing polyketide synthase (NR-PKS) esdpA that generates an alpha-pyrone; the prenyltransferase esdpC that attaches a geranylgeranyl pyrophosphate (GGPP) produced by the GGPP synthase (GGPPS) esdpD onto the pyrone unit; the FAD-dependent monooxygenase esdpE that converts an olefin on the diterpene unit into an epoxide; and the terpene cyclase esdpB that catalyzes the cyclization reactions to give the molecular backbone shearone A. In the modification steps, esdpF oxidizes the hydroxy group to a ketone at C-3 and esdpG then attaches hydroxy groups at both C-11 and C-12. After that, esdpI hydroxylates at C-20 and esdpH hydroxylates at C-6'. The ether bridge is generated by nucleophilic attack of the hydroxy group at C-20 to the carbonyl carbon at C-3. EsdpH can also functions prior to esdpI. The different combinations of these modification enzymes lead to the production of diverse shearone derivatives, shearone I being the end product of the pathway. The alpha-ketoglutarate-dependent dioxygenase esdpJ seems not to be involved in this pathway. The protein is Cytochrome P450 monooxygenase esdpI of Penicillium shearii (Eupenicillium shearii).